The sequence spans 400 residues: Tryptophan--tRNA ligase (400 aa).

The short motif at Pro-12 to His-20 is the 'HIGH' region element. Positions Arg-173–Arg-241 are insert. The 'KMSKS' region signature appears at Lys-265–Ser-269. Lys-268 serves as a coordination point for ATP. The segment at Lys-280 to Pro-305 is disordered. A compositionally biased stretch (basic and acidic residues) spans Ala-295–Asp-304.

It belongs to the class-I aminoacyl-tRNA synthetase family. As to quaternary structure, homodimer.

The protein localises to the cytoplasm. It carries out the reaction tRNA(Trp) + L-tryptophan + ATP = L-tryptophyl-tRNA(Trp) + AMP + diphosphate + H(+). The sequence is that of Tryptophan--tRNA ligase (trpS) from Ralstonia nicotianae (strain ATCC BAA-1114 / GMI1000) (Ralstonia solanacearum).